The primary structure comprises 140 residues: Pre-mRNA-splicing factor NTC20 (140 aa).

Position 139 is a phosphoserine (Ser139).

Belongs to the NTC complex (or PRP19-associated complex), composed of at least CEF1, CLF1, ISY1, NTC20, SNT309, SYF1, SYF2, and PRP19. The NTC complex associates with the spliceosome after the release of the U1 and U4 snRNAs and forms the CWC spliceosome subcomplex (or CEF1-associated complex) reminiscent of a late-stage spliceosome composed also of the U2, U5 and U6 snRNAs and at least BUD13, BRR2, CDC40, CUS1, CWC2, CWC15, CWC21, CWC22, CWC23, CWC24, CWC25, CWC27, ECM2, HSH155, IST3, LEA1, MSL1, PRP8, PRP9, PRP11, PRP21, PRP22, PRP45, PRP46, SLU7, SMB1, SMD1, SMD2, SMD3, SMX2, SMX3, SNU114, SPP2, RSE1 and YJU2. Interacts with CEF1, CLF1, ISY1, PRP46, and SYF1.

The protein resides in the nucleus. In terms of biological role, involved in pre-mRNA splicing. As a component of the NTC complex, associates to the spliceosome to mediate conformational rearrangement or to stabilize the structure of the spliceosome after U4 snRNA dissociation, which leads to spliceosome maturation. The protein is Pre-mRNA-splicing factor NTC20 (NTC20) of Saccharomyces cerevisiae (strain ATCC 204508 / S288c) (Baker's yeast).